A 300-amino-acid chain; its full sequence is Homoserine kinase (300 aa).

87–97 (PISRGLGSSSA) lines the ATP pocket.

The protein belongs to the GHMP kinase family. Homoserine kinase subfamily.

It is found in the cytoplasm. It catalyses the reaction L-homoserine + ATP = O-phospho-L-homoserine + ADP + H(+). Its pathway is amino-acid biosynthesis; L-threonine biosynthesis; L-threonine from L-aspartate: step 4/5. Catalyzes the ATP-dependent phosphorylation of L-homoserine to L-homoserine phosphate. The chain is Homoserine kinase from Clostridium kluyveri (strain ATCC 8527 / DSM 555 / NBRC 12016 / NCIMB 10680 / K1).